The sequence spans 487 residues: Probable Xaa-Pro aminopeptidase CPSG_02684 (487 aa).

A compositionally biased stretch (polar residues) spans 1 to 10 (MAGSNTLSSS). The segment at 1–22 (MAGSNTLSSSEHGDDPRGHSYS) is disordered. Positions 275, 286, 421, and 460 each coordinate Mn(2+).

This sequence belongs to the peptidase M24B family. Requires Mn(2+) as cofactor.

The catalysed reaction is Release of any N-terminal amino acid, including proline, that is linked to proline, even from a dipeptide or tripeptide.. Functionally, catalyzes the removal of a penultimate prolyl residue from the N-termini of peptides. The protein is Probable Xaa-Pro aminopeptidase CPSG_02684 of Coccidioides posadasii (strain RMSCC 757 / Silveira) (Valley fever fungus).